Reading from the N-terminus, the 270-residue chain is Probable septum site-determining protein MinC (270 aa).

Residues 105-129 (DRRAPSSKAADEAPVQQAEPAAPAA) are disordered. Positions 116-129 (EAPVQQAEPAAPAA) are enriched in low complexity.

Belongs to the MinC family. In terms of assembly, interacts with MinD and FtsZ.

In terms of biological role, cell division inhibitor that blocks the formation of polar Z ring septums. Rapidly oscillates between the poles of the cell to destabilize FtsZ filaments that have formed before they mature into polar Z rings. Prevents FtsZ polymerization. This is Probable septum site-determining protein MinC from Burkholderia pseudomallei (strain 1106a).